The following is a 102-amino-acid chain: NADH-quinone oxidoreductase subunit K 2 (102 aa).

The next 3 membrane-spanning stretches (helical) occupy residues Phe-5–Val-25, Leu-30–Gly-50, and Leu-65–Leu-85.

This sequence belongs to the complex I subunit 4L family. In terms of assembly, NDH-1 is composed of 14 different subunits. Subunits NuoA, H, J, K, L, M, N constitute the membrane sector of the complex.

The protein resides in the cell inner membrane. It catalyses the reaction a quinone + NADH + 5 H(+)(in) = a quinol + NAD(+) + 4 H(+)(out). NDH-1 shuttles electrons from NADH, via FMN and iron-sulfur (Fe-S) centers, to quinones in the respiratory chain. The immediate electron acceptor for the enzyme in this species is believed to be ubiquinone. Couples the redox reaction to proton translocation (for every two electrons transferred, four hydrogen ions are translocated across the cytoplasmic membrane), and thus conserves the redox energy in a proton gradient. This Geobacter sulfurreducens (strain ATCC 51573 / DSM 12127 / PCA) protein is NADH-quinone oxidoreductase subunit K 2.